A 261-amino-acid polypeptide reads, in one-letter code: Cytochrome c oxidase subunit 3 (261 aa).

Residues 1–15 (MAHQAHSYHMVDPSP) are Mitochondrial matrix-facing. A helical membrane pass occupies residues 16 to 34 (WPIFGATAALLTTSGLIMW). The Mitochondrial intermembrane portion of the chain corresponds to 35–40 (FHYNSL). The helical transmembrane segment at 41 to 66 (YLLTLGLLSMFLVMIQWWRDIVREST) threads the bilayer. Over 67–72 (FQGHHT) the chain is Mitochondrial matrix. The helical transmembrane segment at 73–105 (PTVQKGLRYGMILFITSEAFFFLGFFWAFFHSS) threads the bilayer. The Mitochondrial intermembrane portion of the chain corresponds to 106–128 (LAPTPELGAQWPPTGINPLNPLE). The chain crosses the membrane as a helical span at residues 129 to 152 (VPLLNTAILLASGVTVTWAHHSIT). Over 153–155 (ESN) the chain is Mitochondrial matrix. A helical transmembrane segment spans residues 156–183 (RKQAIHALSLTIILGFYFTALQAMEYHE). Over 184–190 (ASFSIAD) the chain is Mitochondrial intermembrane. The helical transmembrane segment at 191–223 (GVYGSTFFVATGFHGLHVIIGSSFLTVCLLRLI) threads the bilayer. At 224-232 (KFHFTTNHH) the chain is on the mitochondrial matrix side. The chain crosses the membrane as a helical span at residues 233-256 (FGFEAAAWYWHFVDVIWLFLYMSI). The Mitochondrial intermembrane portion of the chain corresponds to 257 to 261 (YWWGS).

This sequence belongs to the cytochrome c oxidase subunit 3 family. As to quaternary structure, component of the cytochrome c oxidase (complex IV, CIV), a multisubunit enzyme composed of 14 subunits. The complex is composed of a catalytic core of 3 subunits MT-CO1, MT-CO2 and MT-CO3, encoded in the mitochondrial DNA, and 11 supernumerary subunits COX4I, COX5A, COX5B, COX6A, COX6B, COX6C, COX7A, COX7B, COX7C, COX8 and NDUFA4, which are encoded in the nuclear genome. The complex exists as a monomer or a dimer and forms supercomplexes (SCs) in the inner mitochondrial membrane with NADH-ubiquinone oxidoreductase (complex I, CI) and ubiquinol-cytochrome c oxidoreductase (cytochrome b-c1 complex, complex III, CIII), resulting in different assemblies (supercomplex SCI(1)III(2)IV(1) and megacomplex MCI(2)III(2)IV(2)).

It is found in the mitochondrion inner membrane. It carries out the reaction 4 Fe(II)-[cytochrome c] + O2 + 8 H(+)(in) = 4 Fe(III)-[cytochrome c] + 2 H2O + 4 H(+)(out). In terms of biological role, component of the cytochrome c oxidase, the last enzyme in the mitochondrial electron transport chain which drives oxidative phosphorylation. The respiratory chain contains 3 multisubunit complexes succinate dehydrogenase (complex II, CII), ubiquinol-cytochrome c oxidoreductase (cytochrome b-c1 complex, complex III, CIII) and cytochrome c oxidase (complex IV, CIV), that cooperate to transfer electrons derived from NADH and succinate to molecular oxygen, creating an electrochemical gradient over the inner membrane that drives transmembrane transport and the ATP synthase. Cytochrome c oxidase is the component of the respiratory chain that catalyzes the reduction of oxygen to water. Electrons originating from reduced cytochrome c in the intermembrane space (IMS) are transferred via the dinuclear copper A center (CU(A)) of subunit 2 and heme A of subunit 1 to the active site in subunit 1, a binuclear center (BNC) formed by heme A3 and copper B (CU(B)). The BNC reduces molecular oxygen to 2 water molecules using 4 electrons from cytochrome c in the IMS and 4 protons from the mitochondrial matrix. The sequence is that of Cytochrome c oxidase subunit 3 (MT-CO3) from Struthio camelus (Common ostrich).